We begin with the raw amino-acid sequence, 177 residues long: uncharacterized protein (177 aa).

This sequence belongs to the flavoredoxin family. Requires FMN as cofactor.

This is an uncharacterized protein from Archaeoglobus fulgidus (strain ATCC 49558 / DSM 4304 / JCM 9628 / NBRC 100126 / VC-16).